A 247-amino-acid chain; its full sequence is MADS-box protein defh21 (247 aa).

Positions methionine 1–proline 61 constitute an MADS-box domain. Residues asparagine 91–glutamine 183 enclose the K-box domain.

Expressed exclusively in a few inner cell layers of the inner integuments of the ovules.

The protein localises to the nucleus. Functionally, probable transcription factor. This chain is MADS-box protein defh21 (DEFH21), found in Antirrhinum majus (Garden snapdragon).